Reading from the N-terminus, the 35-residue chain is MEALVYTFLLVSTLGIIFFAIFFREPPKIQTKKTK.

A helical transmembrane segment spans residues 3–23 (ALVYTFLLVSTLGIIFFAIFF).

It belongs to the PsbT family. In terms of assembly, PSII is composed of 1 copy each of membrane proteins PsbA, PsbB, PsbC, PsbD, PsbE, PsbF, PsbH, PsbI, PsbJ, PsbK, PsbL, PsbM, PsbT, PsbY, PsbZ, Psb30/Ycf12, at least 3 peripheral proteins of the oxygen-evolving complex and a large number of cofactors. It forms dimeric complexes.

The protein localises to the plastid. It is found in the chloroplast thylakoid membrane. In terms of biological role, found at the monomer-monomer interface of the photosystem II (PS II) dimer, plays a role in assembly and dimerization of PSII. PSII is a light-driven water plastoquinone oxidoreductase, using light energy to abstract electrons from H(2)O, generating a proton gradient subsequently used for ATP formation. In Oenothera argillicola (Appalachian evening primrose), this protein is Photosystem II reaction center protein T.